The sequence spans 654 residues: Pentatricopeptide repeat-containing protein At4g19191, mitochondrial (654 aa).

Residues M1–L65 constitute a mitochondrion transit peptide. PPR repeat units follow at residues D86 to R116, D117 to P151, D152 to V186, Q187 to G217, T220 to P254, D255 to Q289, D290 to R320, T321 to P355, D356 to R390, N392 to K422, T423 to P457, N458 to V488, and G494 to K524. The tract at residues I529–N604 is type E motif. Residues G605–K635 are type E(+) motif.

It belongs to the PPR family. PCMP-E subfamily.

It is found in the mitochondrion. The protein is Pentatricopeptide repeat-containing protein At4g19191, mitochondrial (PCMP-E1) of Arabidopsis thaliana (Mouse-ear cress).